Reading from the N-terminus, the 276-residue chain is S-adenosylmethionine-dependent nucleotide dehydratase (276 aa).

The 211-residue stretch at 6 to 216 folds into the Radical SAM core domain; the sequence is TSVRKFRSAN…RRRHEDIGCI (211 aa). [4Fe-4S] cluster-binding residues include C22, C26, and C29.

The protein belongs to the radical SAM superfamily. Viperin family. [4Fe-4S] cluster serves as cofactor.

The catalysed reaction is CTP + AH2 + S-adenosyl-L-methionine = 3'-deoxy-3',4'-didehydro-CTP + 5'-deoxyadenosine + L-methionine + A + H2O + H(+). Expression of pVip50 in E.coli (strain MG1655) confers resistance to phage P1; has no effect against T7. Catalyzes the conversion of cytosine triphosphate (CTP) to 3'-deoxy-3',4'-didehydro-CTP (ddhCTP), probably via a SAM-dependent radical mechanism. The modified nucleotide represses transcription from T7 RNA polymerase-directed genes (possibly by acting as chain terminators), strongly suggesting these nucleotides block viral polymerase transcription. How this protein allows bacteria to resist viruses that do not encode their own RNA polymerase (such as lambda, P1) is unknown. This Thermoplasmatales archaeon (strain ISO4-H5) protein is S-adenosylmethionine-dependent nucleotide dehydratase.